A 259-amino-acid polypeptide reads, in one-letter code: Phosphate import ATP-binding protein PstB 1 (259 aa).

The 242-residue stretch at 13 to 254 (IQVRGLEFFY…PSKTQTEDYI (242 aa)) folds into the ABC transporter domain. 45–52 (GPSGCGKS) is a binding site for ATP.

The protein belongs to the ABC transporter superfamily. Phosphate importer (TC 3.A.1.7) family. The complex is composed of two ATP-binding proteins (PstB), two transmembrane proteins (PstC and PstA) and a solute-binding protein (PstS).

Its subcellular location is the cell inner membrane. It carries out the reaction phosphate(out) + ATP + H2O = ADP + 2 phosphate(in) + H(+). In terms of biological role, part of the ABC transporter complex PstSACB involved in phosphate import. Responsible for energy coupling to the transport system. The polypeptide is Phosphate import ATP-binding protein PstB 1 (Pseudomonas savastanoi pv. phaseolicola (strain 1448A / Race 6) (Pseudomonas syringae pv. phaseolicola (strain 1448A / Race 6))).